Here is a 455-residue protein sequence, read N- to C-terminus: Ribulose bisphosphate carboxylase large chain (455 aa).

N6,N6,N6-trimethyllysine is present on Lys-5. 2 residues coordinate substrate: Asn-114 and Thr-164. The active-site Proton acceptor is Lys-166. Lys-168 contributes to the substrate binding site. Mg(2+)-binding residues include Lys-192, Asp-194, and Glu-195. Lys-192 carries the post-translational modification N6-carboxylysine. His-285 serves as the catalytic Proton acceptor. Positions 286, 318, and 370 each coordinate substrate.

The protein belongs to the RuBisCO large chain family. Type I subfamily. Heterohexadecamer of 8 large chains and 8 small chains; disulfide-linked. The disulfide link is formed within the large subunit homodimers. Mg(2+) serves as cofactor. The disulfide bond which can form in the large chain dimeric partners within the hexadecamer appears to be associated with oxidative stress and protein turnover.

It is found in the plastid. Its subcellular location is the chloroplast. It carries out the reaction 2 (2R)-3-phosphoglycerate + 2 H(+) = D-ribulose 1,5-bisphosphate + CO2 + H2O. It catalyses the reaction D-ribulose 1,5-bisphosphate + O2 = 2-phosphoglycolate + (2R)-3-phosphoglycerate + 2 H(+). Its function is as follows. RuBisCO catalyzes two reactions: the carboxylation of D-ribulose 1,5-bisphosphate, the primary event in carbon dioxide fixation, as well as the oxidative fragmentation of the pentose substrate in the photorespiration process. Both reactions occur simultaneously and in competition at the same active site. The sequence is that of Ribulose bisphosphate carboxylase large chain from Lupinus arcticus (Arctic lupine).